A 305-amino-acid chain; its full sequence is tRNA dimethylallyltransferase (305 aa).

8–15 (GPTAVGKT) is an ATP binding site. 10 to 15 (TAVGKT) contributes to the substrate binding site. The interaction with substrate tRNA stretch occupies residues 33–36 (DSRQ).

Belongs to the IPP transferase family. In terms of assembly, monomer. Requires Mg(2+) as cofactor.

The catalysed reaction is adenosine(37) in tRNA + dimethylallyl diphosphate = N(6)-dimethylallyladenosine(37) in tRNA + diphosphate. In terms of biological role, catalyzes the transfer of a dimethylallyl group onto the adenine at position 37 in tRNAs that read codons beginning with uridine, leading to the formation of N6-(dimethylallyl)adenosine (i(6)A). This is tRNA dimethylallyltransferase from Thermotoga neapolitana (strain ATCC 49049 / DSM 4359 / NBRC 107923 / NS-E).